The chain runs to 194 residues: Holliday junction branch migration complex subunit RuvA (194 aa).

Residues 1–64 form a domain I region; it reads MISRLTGKLV…EDAHLLFGFA (64 aa). The interval 65-143 is domain II; it reads TAEERKTFRQ…AHAVTDGLFA (79 aa). The tract at residues 144–147 is flexible linker; it reads AAPA. Positions 147–194 are domain III; sequence AADETEDIVGTLLALGYSEREAKAAVKGVPKGTDVGEGVRLALKNLLK.

The protein belongs to the RuvA family. In terms of assembly, homotetramer. Forms an RuvA(8)-RuvB(12)-Holliday junction (HJ) complex. HJ DNA is sandwiched between 2 RuvA tetramers; dsDNA enters through RuvA and exits via RuvB. An RuvB hexamer assembles on each DNA strand where it exits the tetramer. Each RuvB hexamer is contacted by two RuvA subunits (via domain III) on 2 adjacent RuvB subunits; this complex drives branch migration. In the full resolvosome a probable DNA-RuvA(4)-RuvB(12)-RuvC(2) complex forms which resolves the HJ.

Its subcellular location is the cytoplasm. The RuvA-RuvB-RuvC complex processes Holliday junction (HJ) DNA during genetic recombination and DNA repair, while the RuvA-RuvB complex plays an important role in the rescue of blocked DNA replication forks via replication fork reversal (RFR). RuvA specifically binds to HJ cruciform DNA, conferring on it an open structure. The RuvB hexamer acts as an ATP-dependent pump, pulling dsDNA into and through the RuvAB complex. HJ branch migration allows RuvC to scan DNA until it finds its consensus sequence, where it cleaves and resolves the cruciform DNA. This is Holliday junction branch migration complex subunit RuvA from Neisseria meningitidis serogroup C / serotype 2a (strain ATCC 700532 / DSM 15464 / FAM18).